The following is a 465-amino-acid chain: MAAAARARVTHLLRHLQSTACQCPTHSHTYSQAPGPSGKTADYAFEMAVSNIRYGAGVTKEVGMDLQNMGAKNVCLMTDKNLSQLPPVQIVMDSLSKNGISFQVYDDVRVEPTDGSFMDAIEFAKKGAFDAYVAVGGGSTMDTCKAANLYASSPHSEFLDYVNAPIGKGKPVTVPLKPLIAVPTTSGTGSETTGVAIFDYEHLKVKTGIASRAIKPTLGLVDPLHTLHMPCQVVANSGFDVLCHALESYTAIPYSMRSPCPSNPIQRPAYQGSNPISDIWAVHALQIVAKYLKRAVRNPDDLEARSKMHLASAFAGIGFGNAGVHLCHGMSYPISGLVKTYKAKEYNVDHPLVPHGLSVVLTSPAVFTFTAQMFPERHLETAGILGANIRTARIQDAGLVLADALRKFLFDLNVDDGLAALGYSKDDIPSLVKGTLPQERVTKLAPRAQSEEDLSALFEASMKLY.

N6-acetyllysine is present on lysine 443. Phosphoserine is present on serine 450.

Belongs to the iron-containing alcohol dehydrogenase family. Hydroxyacid-oxoacid transhydrogenase subfamily. As to expression, expressed in white and brown adipose tissues, liver, and kidney. Expression is differentiation-dependent during in vitro brown and white adipogenesis.

It localises to the mitochondrion. The enzyme catalyses (S)-3-hydroxybutanoate + 2-oxoglutarate = (R)-2-hydroxyglutarate + acetoacetate. It carries out the reaction 4-hydroxybutanoate + 2-oxoglutarate = (R)-2-hydroxyglutarate + succinate semialdehyde. In terms of biological role, catalyzes the cofactor-independent reversible oxidation of gamma-hydroxybutyrate (GHB) to succinic semialdehyde (SSA) coupled to reduction of 2-ketoglutarate (2-KG) to D-2-hydroxyglutarate (D-2-HG). L-3-hydroxybutyrate (L-3-OHB) is also a substrate for HOT when using 2-KG as hydrogen acceptor, resulting in the formation of D-2-HG. This chain is Hydroxyacid-oxoacid transhydrogenase, mitochondrial (Adhfe1), found in Mus musculus (Mouse).